Reading from the N-terminus, the 79-residue chain is Acyl carrier protein (79 aa).

A Carrier domain is found at Ser2 to Ala77. Position 37 is an O-(pantetheine 4'-phosphoryl)serine (Ser37).

Belongs to the acyl carrier protein (ACP) family. In terms of processing, 4'-phosphopantetheine is transferred from CoA to a specific serine of apo-ACP by AcpS. This modification is essential for activity because fatty acids are bound in thioester linkage to the sulfhydryl of the prosthetic group.

It is found in the cytoplasm. The protein operates within lipid metabolism; fatty acid biosynthesis. Carrier of the growing fatty acid chain in fatty acid biosynthesis. This is Acyl carrier protein from Thioalkalivibrio sulfidiphilus (strain HL-EbGR7).